A 427-amino-acid polypeptide reads, in one-letter code: Glutamate-1-semialdehyde 2,1-aminomutase (427 aa).

N6-(pyridoxal phosphate)lysine is present on Lys265.

Belongs to the class-III pyridoxal-phosphate-dependent aminotransferase family. HemL subfamily. In terms of assembly, homodimer. Pyridoxal 5'-phosphate is required as a cofactor.

It is found in the cytoplasm. The enzyme catalyses (S)-4-amino-5-oxopentanoate = 5-aminolevulinate. It functions in the pathway porphyrin-containing compound metabolism; protoporphyrin-IX biosynthesis; 5-aminolevulinate from L-glutamyl-tRNA(Glu): step 2/2. The chain is Glutamate-1-semialdehyde 2,1-aminomutase from Edwardsiella ictaluri (strain 93-146).